The chain runs to 258 residues: Pro-thyrotropin-releasing hormone-A (258 aa).

Positions 1 to 22 are cleaved as a signal peptide; it reads MKSACLIILASLVVCNLTLARG. Position 78 is a pyrrolidone carboxylic acid (glutamine 78). Position 80 is a proline amide (proline 80). Composition is skewed to basic and acidic residues over residues 84–98 and 107–119; these read YQEE…GKRE and EVQK…KRED. The disordered stretch occupies residues 84–124; that stretch reads YQEELEKRQHPGKREEDEDEDYDEVQKRQHPGKREDEFDSF. Residue glutamine 92 is modified to Pyrrolidone carboxylic acid. Proline 94 carries the proline amide modification. Position 112 is a pyrrolidone carboxylic acid (glutamine 112). The residue at position 114 (proline 114) is a Proline amide. A Pyrrolidone carboxylic acid modification is found at glutamine 131. Proline 133 carries the proline amide modification. Glutamine 156 is subject to Pyrrolidone carboxylic acid. Proline amide is present on proline 158. 2 disordered regions span residues 166–215 and 236–258; these read YSKR…PCDV and SRAE…TEQE. A Pyrrolidone carboxylic acid modification is found at glutamine 170. Residue proline 172 is modified to Proline amide. Residues 184–193 show a composition bias toward basic and acidic residues; it reads GDLRELEKRQ. Glutamine 193 is subject to Pyrrolidone carboxylic acid. A Proline amide modification is found at proline 195. Glutamine 242 carries the pyrrolidone carboxylic acid modification. Proline 244 carries the proline amide modification.

The protein belongs to the TRH family.

Its subcellular location is the secreted. Functionally, functions as a regulator of the biosynthesis of TSH in the anterior pituitary gland and as a neurotransmitter/ neuromodulator in the central and peripheral nervous systems. The polypeptide is Pro-thyrotropin-releasing hormone-A (trha) (Oncorhynchus nerka (Sockeye salmon)).